The primary structure comprises 713 residues: Signal transducer and activator of transcription 1 (713 aa).

Positions 477 to 574 (WCIGFISKHD…EEMLRYFESE (98 aa)) constitute an SH2 domain.

Belongs to the transcription factor STAT family. Forms a homodimer or a heterodimer with a related family member.

The protein localises to the cytoplasm. Its subcellular location is the nucleus. In terms of biological role, carries out a dual function: signal transduction and activation of transcription. Activated STAT proteins play a role in repression of dauer formation. Neuronal expression is held in check by negative signals through the TGF-beta pathway that target the daf-3 transcription factor. The polypeptide is Signal transducer and activator of transcription 1 (Caenorhabditis briggsae).